We begin with the raw amino-acid sequence, 402 residues long: uncharacterized protein (402 aa).

The interval 332 to 402 (MFSSSSSSSE…PEPPPGKPGR (71 aa)) is disordered. Polar residues predominate over residues 370–379 (SETTSLQQYS). The segment covering 393 to 402 (PEPPPGKPGR) has biased composition (pro residues).

This is an uncharacterized protein from Mus musculus (Mouse).